Here is a 324-residue protein sequence, read N- to C-terminus: Type II restriction enzyme AplI (324 aa).

The protein belongs to the BsuBI/PstI type II restriction endonuclease family. Mg(2+) serves as cofactor.

The enzyme catalyses Endonucleolytic cleavage of DNA to give specific double-stranded fragments with terminal 5'-phosphates.. Activated by K(+) and Na(+) ions, whereas NH(4)(+) ions appear to inhibit endonuclease activity. A P subtype restriction enzyme that recognizes the double-stranded sequence 5'-CTGCAG-3' and cleaves after A-5. In Arthrospira platensis (strain NIES-39 / UTEX 3086 / IAM M-135) (Spirulina platensis), this protein is Type II restriction enzyme AplI (aplIR).